The sequence spans 92 residues: Small ribosomal subunit protein bS20 (92 aa).

The interval 1–23 (MANSPSAKKRAKQAEKRRSHNAS) is disordered. Over residues 7 to 20 (AKKRAKQAEKRRSH) the composition is skewed to basic residues.

The protein belongs to the bacterial ribosomal protein bS20 family.

Binds directly to 16S ribosomal RNA. This is Small ribosomal subunit protein bS20 from Ectopseudomonas mendocina (strain ymp) (Pseudomonas mendocina).